We begin with the raw amino-acid sequence, 243 residues long: UPF0280 protein Memar_1519 (243 aa).

This sequence belongs to the UPF0280 family.

The polypeptide is UPF0280 protein Memar_1519 (Methanoculleus marisnigri (strain ATCC 35101 / DSM 1498 / JR1)).